A 1134-amino-acid polypeptide reads, in one-letter code: MGLLASAGLLLLLVIGHPRSLGLKCGIRMVNMKSKEPAVGSRFFSRISSWRNSTVTGHPWQVSLKSDEHHFCGGSLIQEDRVVTAAHCLDSLSEKQLKNITVTSGEYSLFQKDKQEQNIPVSKIITHPEYNSREYMSPDIALLYLKHKVKFGNAVQPICLPDSDDKVEPGILCLSSGWGKISKTSEYSNVLQEMELPIMDDRACNTVLKSMNLPPLGRTMLCAGFPDWGMDACQGDSGGPLVCRRGGGIWILAGITSWVAGCAGGSVPVRNNHVKASLGIFSKVSELMDFITQNLFTGLDRGQPLSKVGSRYITKALSSVQEVNGSQRGKGILDMEKQVGCDHDYVSLRSSSGVLFNQRSLMEDDGKQNKRVCGKILPSPLLAETSEAMVPFVSDTEDSGSGFELTVTAVQKSEAGSGCGSLAILVEEGTNHSAKYPDLYPSNTRCHWFICAPEKHIIKLTFEDFAVKFSPNCIYDAVVIYGDSEEKHKLAKLCGMLTITSIFSSSNMTVIYFKSDGKNRLQGFKARFTILPSESLNKFEPKLPPQNNPVSTVKAILHDVCGIPPFSPQWLSRRIAGGEEACPHCWPWQVGLRFLGDYQCGGAIINPVWILTAAHCVQLKNNPLSWTIIAGDHDRNLKESTEQVRRAKHIIVHEDFNTLSYDSDIALIQLSSPLEYNSVVRPVCLPHSAEPLFSSEICAVTGWGSISADGGLASRLQQIQVHVLEREVCEHTYYSAHPGGITEKMICAGFAASGEKDFCQGDSGGPLVCRHENGPFVLYGIVSWGAGCVQPWKPGVFARVMIFLDWIQSKINGPASLQTNNKCKTLKQQLPPPTPSPDSASWPGCCSEAELEKPRGFFPTPRYLLDYRGRLECSWVLRVSASSMAKFTIEYLSLLGSPVCQDSVLIIYEERHSKRKTAGGLHGRRLYSMTFMSPGPLVRVTFHALVRGAFGISYIVLKVLGPKDSKITRLSQSSNREHLVPCEDVLLTKPEGIMQIPRNSHRTTMGCQWRLVAPLNHIIQLNIINFPMKPTTFVCHGHLRVYEGFGPGKKLIASFAGTLAMILTKDILKREKLNFINTYIMHIWENSVYDNVRSVGKRKQKKFASNLSYSMEAEKSRIQVPADLVPAKGSLSGS.

The first 22 residues, 1–22, serve as a signal peptide directing secretion; the sequence is MGLLASAGLLLLLVIGHPRSLG. Residues 23 to 46 constitute a propeptide, activation peptide; it reads LKCGIRMVNMKSKEPAVGSRFFSR. One can recognise a Peptidase S1 1 domain in the interval 38-296; sequence AVGSRFFSRI…LMDFITQNLF (259 aa). N-linked (GlcNAc...) asparagine glycosylation is present at N52. An intrachain disulfide couples C72 to C88. H87 functions as the Charge relay system in the catalytic mechanism. N-linked (GlcNAc...) asparagine glycosylation is present at N99. E116 contacts Ca(2+). Catalysis depends on D139, which acts as the Charge relay system. Intrachain disulfides connect C173–C243, C204–C222, and C233–C262. S237 acts as the Charge relay system in catalysis. CUB domains are found at residues 284–410 and 419–531; these read VSEL…VTAV and CGSL…FTIL. N-linked (GlcNAc...) asparagine glycosylation occurs at N324. Intrachain disulfides connect C341-C373, C419-C446, and C473-C494. A glycan (N-linked (GlcNAc...) asparagine) is linked at N431. The N-linked (GlcNAc...) asparagine glycan is linked to N507. The 238-residue stretch at 575 to 812 folds into the Peptidase S1 2 domain; the sequence is IAGGEEACPH…FLDWIQSKIN (238 aa). An intrachain disulfide couples C600 to C616. Active-site charge relay system residues include H615 and D664. 4 disulfide bridges follow: C698-C769, C729-C747, C759-C788, and C846-C873. Residue S763 is the Charge relay system of the active site. Positions 846-957 constitute a CUB 3 domain; sequence CSEAELEKPR…GAFGISYIVL (112 aa). N-linked (GlcNAc...) asparagine glycosylation is present at N1106.

This sequence belongs to the peptidase S1 family.

The protein resides in the secreted. This is Ovochymase-1 (OVCH1) from Homo sapiens (Human).